Reading from the N-terminus, the 285-residue chain is Small ribosomal subunit protein uS2 (285 aa).

A disordered region spans residues 231–285 (GGKSGQAAAEPMAEWERELLEQHNAQQAEQAEAPAAEAPAEPAEAPAAEAAPQGE). Residues 255–285 (AQQAEQAEAPAAEAPAEPAEAPAAEAAPQGE) are compositionally biased toward low complexity.

It belongs to the universal ribosomal protein uS2 family.

This Micrococcus luteus (strain ATCC 4698 / DSM 20030 / JCM 1464 / CCM 169 / CCUG 5858 / IAM 1056 / NBRC 3333 / NCIMB 9278 / NCTC 2665 / VKM Ac-2230) (Micrococcus lysodeikticus) protein is Small ribosomal subunit protein uS2.